The sequence spans 559 residues: Formate--tetrahydrofolate ligase (559 aa).

68 to 75 (TPAGEGKT) serves as a coordination point for ATP.

It belongs to the formate--tetrahydrofolate ligase family.

It carries out the reaction (6S)-5,6,7,8-tetrahydrofolate + formate + ATP = (6R)-10-formyltetrahydrofolate + ADP + phosphate. It participates in one-carbon metabolism; tetrahydrofolate interconversion. This chain is Formate--tetrahydrofolate ligase, found in Rhizobium meliloti (strain 1021) (Ensifer meliloti).